The sequence spans 170 residues: Acetyl-CoA decarbonylase/synthase complex subunit epsilon 1 (170 aa).

The protein belongs to the CdhB family. Heterotetramer of two alpha and two epsilon subunits. The ACDS complex is made up of alpha, epsilon, beta, gamma and delta subunits with a probable stoichiometry of (alpha(2)epsilon(2))(4)-beta(8)-(gamma(1)delta(1))(8).

The protein operates within one-carbon metabolism; methanogenesis from acetate. In terms of biological role, part of a complex that catalyzes the reversible cleavage of acetyl-CoA, allowing growth on acetate as sole source of carbon and energy. The alpha-epsilon subcomponent functions as a carbon monoxide dehydrogenase. The precise role of the epsilon subunit is unclear; it may have a stabilizing role within the alpha(2)epsilon(2) component and/or be involved in electron transfer to FAD during a potential FAD-mediated CO oxidation. This chain is Acetyl-CoA decarbonylase/synthase complex subunit epsilon 1, found in Methanosarcina barkeri (strain Fusaro / DSM 804).